A 250-amino-acid polypeptide reads, in one-letter code: Tryptophan synthase alpha chain (250 aa).

Residues glutamate 31 and aspartate 42 each act as proton acceptor in the active site.

Belongs to the TrpA family. As to quaternary structure, tetramer of two alpha and two beta chains.

The catalysed reaction is (1S,2R)-1-C-(indol-3-yl)glycerol 3-phosphate + L-serine = D-glyceraldehyde 3-phosphate + L-tryptophan + H2O. The protein operates within amino-acid biosynthesis; L-tryptophan biosynthesis; L-tryptophan from chorismate: step 5/5. The alpha subunit is responsible for the aldol cleavage of indoleglycerol phosphate to indole and glyceraldehyde 3-phosphate. This Staphylococcus carnosus (strain TM300) protein is Tryptophan synthase alpha chain.